The sequence spans 331 residues: Major ferric iron-binding protein (331 aa).

Positions 1–22 (MKTSIRYALLAAALTAATPALA) are cleaved as a signal peptide. 4 residues coordinate Fe cation: H31, E79, Y217, and Y218.

The protein belongs to the bacterial solute-binding protein 1 family.

The protein localises to the periplasm. This protein may be a central component in the iron-acquisition system. The chain is Major ferric iron-binding protein (fbpA) from Neisseria meningitidis serogroup B (strain ATCC BAA-335 / MC58).